We begin with the raw amino-acid sequence, 411 residues long: Meiotic driver wtf33 (411 aa).

The segment at 1–95 is disordered; it reads MKNKYYPLRS…ENHSSGTADN (95 aa). The span at 11 to 29 shows a compositional bias: basic and acidic residues; it reads SMDELSTKNDNEIDLEKGP. Residues 57-72 are compositionally biased toward polar residues; the sequence is GANNPNLFNTDESTTP. A run of 6 helical transmembrane segments spans residues 104–124, 137–157, 244–264, 281–301, 303–323, and 336–356; these read AILS…YLTY, WVYF…LWCF, EMMI…FGCV, TISA…WTLW, ALSG…LVNG, and GYEI…LYEM.

It belongs to the WTF family. Homomer. Forms protein aggregates. The two isoforms can interact with each other and with themselves. High sequence similarity is required for their interaction.

The protein localises to the spore membrane. It is found in the vacuole membrane. It localises to the ascus epiplasm. Its subcellular location is the cytoplasm. The protein resides in the endoplasmic reticulum membrane. In terms of biological role, promotes unequal transmission of alleles from the parental zygote to progeny spores by acting as poison/antidote system where the poison and antidote proteins are produced from the same locus; the poison component is trans-acting and targets all spores within an ascus whereas the antidote component is spore-specific, leading to poisoning of all progeny that do not inherit the allele. Localizes isoform 2 to the vacuole thereby facilitating its degradation. Functionally, forms toxic aggregates that disrupt spore maturation. The chain is Meiotic driver wtf33 from Schizosaccharomyces kambucha (Fission yeast).